The primary structure comprises 167 residues: MSNLTYLQGYPEQLLSQVRTLINEQRLGDVLAKRYPGTHDYATDKALWQYTQDLKNQFLRNAPPINKVMYDNKIHVLKNALGLHTAVSRVQGGKLKAKVEIRVATVFRNAPEPFLRMIVVHELAHLKEKEHNKAFYQLCCHMEPQYHQLEFDTRLWLTQLSLGQNKI.

It catalyses the reaction UTP + H2O = UMP + diphosphate + H(+). Its function is as follows. Specifically catalyzes the hydrolysis of UTP to UMP and diphosphate in vitro, albeit at apparently slow rate. Shows no activity towards ATP, GTP, CTP, dTTP and ITP as substrates. The polypeptide is UTP pyrophosphatase (Escherichia coli (strain K12)).